We begin with the raw amino-acid sequence, 507 residues long: ATP synthase subunit alpha, chloroplastic (507 aa).

170–177 is a binding site for ATP; that stretch reads GDRQTGKT.

It belongs to the ATPase alpha/beta chains family. As to quaternary structure, F-type ATPases have 2 components, CF(1) - the catalytic core - and CF(0) - the membrane proton channel. CF(1) has five subunits: alpha(3), beta(3), gamma(1), delta(1), epsilon(1). CF(0) has four main subunits: a, b, b' and c.

It is found in the plastid. The protein localises to the chloroplast thylakoid membrane. The enzyme catalyses ATP + H2O + 4 H(+)(in) = ADP + phosphate + 5 H(+)(out). Functionally, produces ATP from ADP in the presence of a proton gradient across the membrane. The alpha chain is a regulatory subunit. This chain is ATP synthase subunit alpha, chloroplastic, found in Silene latifolia (White campion).